A 104-amino-acid polypeptide reads, in one-letter code: MIRKAFVMQVNPDAHEEYQRRHNHIWPELEAVLKAHGAHHYAIYLDKERHLLFATVEIESEARWEAVASTEVCQRWWKYMREVMPSNPDNSPLSAELKEVFYLA.

Tyr-18 is a binding site for substrate. The active-site Proton donor is the His-22. Substrate-binding positions include Tyr-41 and 76–77 (WW).

It belongs to the rhamnose mutarotase family. Homodimer.

It localises to the cytoplasm. The catalysed reaction is alpha-L-rhamnose = beta-L-rhamnose. Its pathway is carbohydrate metabolism; L-rhamnose metabolism. Involved in the anomeric conversion of L-rhamnose. The chain is L-rhamnose mutarotase from Klebsiella pneumoniae subsp. pneumoniae (strain ATCC 700721 / MGH 78578).